The following is a 1149-amino-acid chain: Translocase of chloroplast 126, chloroplastic (1149 aa).

Disordered stretches follow at residues 1-206 (MDAL…GKEL), 219-292 (NMPN…RELT), and 315-431 (LELK…VNPS). The span at 131 to 142 (LYYDDYGDDGEV) shows a compositional bias: acidic residues. The segment covering 152 to 168 (TSSSSSSSSSECSSSAS) has biased composition (low complexity). Acidic residues-rich tracts occupy residues 271-280 (YDQEGEDADS) and 335-357 (GESD…DEHE). Polar residues predominate over residues 406–429 (TAATDTQSSNAASSTQVAGTTDVN). The AIG1-type G domain occupies 514 to 743 (DFACTILVLG…KLQDTAAPGR (230 aa)). The G1 stretch occupies residues 523-530 (GKTGVGKS). 526-531 (GVGKSA) is a binding site for GTP. Ser530 lines the Mg(2+) pocket. Positions 550-554 (STTNV) are G2. Positions 570–573 (DTPG) are G3. Residues 642 to 645 (THAS) are G4. Residues His643 and 691-692 (EN) contribute to the GTP site. Residues 691 to 693 (ENH) form a G5 region. Disordered stretches follow at residues 769-800 (KLPD…LPPF) and 833-869 (KQHR…DEAG). Over residues 773–796 (EQLDESDESDDDEEDEEEGDEYDD) the composition is skewed to acidic residues. Composition is skewed to basic and acidic residues over residues 833–842 (KQHREQLQRR) and 852–862 (MRKEGLSHPAD). The chain crosses the membrane as a helical span at residues 1123 to 1144 (MVLIGIVPILRSLINCRFGFGG).

It belongs to the TRAFAC class TrmE-Era-EngA-EngB-Septin-like GTPase superfamily. AIG1/Toc34/Toc159-like paraseptin GTPase family. TOC159 subfamily. As to quaternary structure, part of the TOC core complex. It depends on Mg(2+) as a cofactor.

Its subcellular location is the plastid. It is found in the chloroplast outer membrane. In terms of biological role, GTPase involved in protein precursor import into chloroplasts. Seems to recognize chloroplast-destined precursor proteins and regulate their presentation to the translocation channel through GTP hydrolysis. Probably specialized in the import of nuclear encoded non-photosynthetic preproteins from the cytoplasm to the chloroplast. This Physcomitrium patens (Spreading-leaved earth moss) protein is Translocase of chloroplast 126, chloroplastic.